The primary structure comprises 276 residues: NADPH-dependent 7-cyano-7-deazaguanine reductase (276 aa).

Position 83–85 (83–85 (IES)) interacts with substrate. 85–86 (SK) provides a ligand contact to NADPH. C184 acts as the Thioimide intermediate in catalysis. The active-site Proton donor is the D191. 223–224 (HE) is a binding site for substrate. 252-253 (RG) contacts NADPH.

Belongs to the GTP cyclohydrolase I family. QueF type 2 subfamily. As to quaternary structure, homodimer.

Its subcellular location is the cytoplasm. The catalysed reaction is 7-aminomethyl-7-carbaguanine + 2 NADP(+) = 7-cyano-7-deazaguanine + 2 NADPH + 3 H(+). The protein operates within tRNA modification; tRNA-queuosine biosynthesis. Catalyzes the NADPH-dependent reduction of 7-cyano-7-deazaguanine (preQ0) to 7-aminomethyl-7-deazaguanine (preQ1). This is NADPH-dependent 7-cyano-7-deazaguanine reductase from Pseudomonas aeruginosa (strain ATCC 15692 / DSM 22644 / CIP 104116 / JCM 14847 / LMG 12228 / 1C / PRS 101 / PAO1).